The following is a 384-amino-acid chain: 2-deoxy-scyllo-inosose synthase (384 aa).

Residues D42, 73 to 76 (EVHK), 105 to 109 (GITGN), 129 to 130 (TT), 140 to 142 (SLK), and 151 to 152 (KN) contribute to the NAD(+) site. The active site involves K142. E184 lines the Co(2+) pocket. Residue E244 is part of the active site. Residues H247 and H263 each contribute to the Co(2+) site.

This sequence belongs to the sugar phosphate cyclases superfamily. DOI synthase family. Requires NAD(+) as cofactor. The cofactor is Co(2+).

It carries out the reaction D-glucose 6-phosphate = 2-deoxy-L-scyllo-inosose + phosphate. The protein operates within metabolic intermediate biosynthesis; 2-deoxystreptamine biosynthesis; 2-deoxystreptamine from D-glucose 6-phosphate: step 1/4. It participates in antibiotic biosynthesis; lividomycin biosynthesis. Functionally, catalyzes the intramolecular carbocycle formation from D-glucose-6-phosphate to 2-deoxy-scyllo-inosose (DOI). The sequence is that of 2-deoxy-scyllo-inosose synthase (livC) from Streptomyces lividus.